The primary structure comprises 710 residues: Conserved oligomeric Golgi complex subunit 2 (710 aa).

It belongs to the COG2 family. In terms of assembly, component of the conserved oligomeric Golgi complex which is composed of eight different subunits and is required for normal Golgi morphology and localization.

It is found in the golgi apparatus membrane. In terms of biological role, required for normal Golgi morphology and function. This chain is Conserved oligomeric Golgi complex subunit 2, found in Drosophila melanogaster (Fruit fly).